Reading from the N-terminus, the 367-residue chain is Protein-glutamate methylesterase/protein-glutamine glutaminase 1 (367 aa).

A Response regulatory domain is found at 9–126 (KVLCVDDSAL…RDGMLDYSEK (118 aa)). Residue aspartate 60 is modified to 4-aspartylphosphate. Residues 168–360 (LVSTEKLIIV…RRIMARLASM (193 aa)) enclose the CheB-type methylesterase domain. Residues serine 180, histidine 206, and aspartate 302 contribute to the active site.

Belongs to the CheB family. Post-translationally, phosphorylated by CheA. Phosphorylation of the N-terminal regulatory domain activates the methylesterase activity.

The protein localises to the cytoplasm. The catalysed reaction is [protein]-L-glutamate 5-O-methyl ester + H2O = L-glutamyl-[protein] + methanol + H(+). It catalyses the reaction L-glutaminyl-[protein] + H2O = L-glutamyl-[protein] + NH4(+). Its function is as follows. Involved in chemotaxis. Part of a chemotaxis signal transduction system that modulates chemotaxis in response to various stimuli. Catalyzes the demethylation of specific methylglutamate residues introduced into the chemoreceptors (methyl-accepting chemotaxis proteins or MCP) by CheR. Also mediates the irreversible deamidation of specific glutamine residues to glutamic acid. This is Protein-glutamate methylesterase/protein-glutamine glutaminase 1 from Burkholderia pseudomallei (strain K96243).